A 185-amino-acid polypeptide reads, in one-letter code: CASP-like protein 2C1 (185 aa).

At 1–12 the chain is on the cytoplasmic side; that stretch reads MVAARVSEVKAE. The helical transmembrane segment at 13–33 threads the bilayer; sequence GVLRGACAALAAAAALLVGLS. The Extracellular segment spans residues 34-52; it reads TQTETVLLVRKKATVKDVQ. A helical membrane pass occupies residues 53–73; sequence ALWVLAMAAAAAAGYHLLQLL. Residues 74-105 are Cytoplasmic-facing; sequence KCFYLGRRVGGGASPCRRSSRALAWTCLLLDK. A helical membrane pass occupies residues 106-126; it reads ACAYTTFATTVAAAQACVIAL. At 127-147 the chain is on the extracellular side; it reads DGAHALQWTKLCNIYTRFCEQ. The helical transmembrane segment at 148 to 168 threads the bilayer; that stretch reads IAGSLVLGMLAAVGTAVLSAA. At 169–185 the chain is on the cytoplasmic side; sequence SARNVFRHYSPGTYAAH.

The protein belongs to the Casparian strip membrane proteins (CASP) family. As to quaternary structure, homodimer and heterodimers.

Its subcellular location is the cell membrane. This Sorghum bicolor (Sorghum) protein is CASP-like protein 2C1.